We begin with the raw amino-acid sequence, 947 residues long: Microtubule cross-linking factor 3 (947 aa).

A signal peptide spans 1–21 (MSQPPIGGAAPATAAASPAAA). Disordered stretches follow at residues 1–251 (MSQP…SYWK), 266–368 (KERA…TLKN), and 496–524 (LSLK…DNED). Low complexity-rich tracts occupy residues 9–24 (AAPA…AATE), 72–81 (QQQLQQQQQQ), and 109–137 (APKG…ALGG). Residues 141–151 (GPPEEPPRELE) are compositionally biased toward basic and acidic residues. Residues 164 to 180 (GEGGGGGGEGGGAGGGS) are compositionally biased toward gly residues. Low complexity predominate over residues 214–236 (ASPSPSSSSAGKTPGTGSRNSGS). Residues 237 to 248 (GVAGGGSGGGGS) show a composition bias toward gly residues. 2 stretches are compositionally biased toward low complexity: residues 287-297 (SSRSSPVSGPP) and 304-325 (AVAS…AEGS). The stretch at 342 to 726 (HPQQLQEQEE…GKVMQLQYEN (385 aa)) forms a coiled coil. 2 stretches are compositionally biased toward basic and acidic residues: residues 355–368 (EMEK…TLKN) and 496–513 (LSLK…EKKA). At Ser-569 the chain carries Phosphoserine. A disordered region spans residues 743-786 (GIRGSPRDSDAESDAGKKESDDDSRPPHRKREGPIGGESDSEEV). Residues 747-768 (SPRDSDAESDAGKKESDDDSRP) show a composition bias toward basic and acidic residues. At Ser-781 the chain carries Phosphoserine. The stretch at 811-835 (DRQQMKDIRSEAERLGKTIDRLIAD) forms a coiled coil. Residues 915–935 (PIILLILILVLFSSLSYTTIF) traverse the membrane as a helical segment.

It belongs to the MTCL family.

Its subcellular location is the membrane. The polypeptide is Microtubule cross-linking factor 3 (Homo sapiens (Human)).